Consider the following 322-residue polypeptide: AB hydrolase superfamily protein FGSG_00044 (322 aa).

An AB hydrolase-1 domain is found at 36–319; the sequence is RTTPKQPVAI…ITAEVRRIVK (284 aa).

It belongs to the AB hydrolase superfamily.

The protein operates within mycotoxin biosynthesis. In terms of biological role, AB hydrolase superfamily protein; part of the gene cluster that mediates the biosynthesis of gramillins A and B, bicyclic lipopeptides that induce cell death in maize leaves but not in wheat leaves. The nonribosomal peptide synthetase GRA1 incorporates respectively a glutamic adic (Glu), a leucine (Leu), a serine (Ser), a hydroxyglutamine (HOGln), a 2-amino decanoic acid, and 2 cysteins (CysB and CysA). The biosynthesis of 2-amino decanoic acid incorporated in gramillins could be initiated by a fatty acid synthase composed of the alpha and beta subunits FGSG_00036 and FGSG_11656. The cytochrome P450 monooxygenase FGSG_15680 could hydroxylate the fatty acid chain. Subsequent oxidation to the ketone by the oxidoreductase FGSG_00048 and transamination by aminotransferase FGSG_00049 could form 2-amino-decanoic acid. On the other hand, FGSG_15680 could also be responsible for the HO-modified glutamine at the gamma-position. Whether hydroxylation occurs on the fully assembled product or on the Gln residue prior to assembly into the gramillins requires further proof. The thioredoxin FGSG_00043 could also be required for the disulfide-bond formation between CysA and CysB. The specific involvement of the remaining proteins from the cluster is more difficult to discern, but could have broader regulatory (FGSG_00040 and FGSG_11657) or enzymatic functions (FGSG_00044 and FGSG_00045). The final C-domain of GRA1 does not possess the expected sequence of a termination CT domain, often implicated in macrocyclization and release of a cyclopeptidein fungal NRPs; and the thioesterase FGSG_00047 may act in concert with the terminal C-domain of GRA1 to catalyze the formation of the macrocyclic anhydride and release of the products. This chain is AB hydrolase superfamily protein FGSG_00044, found in Gibberella zeae (strain ATCC MYA-4620 / CBS 123657 / FGSC 9075 / NRRL 31084 / PH-1) (Wheat head blight fungus).